The following is a 3763-amino-acid chain: Colossin-B (3763 aa).

An N-terminal signal peptide occupies residues 1–19 (MKGSIFLLFIFQIFKFSSS). Residues asparagine 43, asparagine 110, asparagine 258, and asparagine 284 are each glycosylated (N-linked (GlcNAc...) asparagine). The Follistatin-like 1 domain occupies 619 to 643 (DCSTLQCPSGYECKLDKNSKTRGCI). 2 N-linked (GlcNAc...) asparagine glycosylation sites follow: asparagine 652 and asparagine 672. 2 consecutive Follistatin-like domains span residues 701-724 (HCRNVDCPKSHYCKIQRNGLPRCF) and 729-752 (PCEFVSCDCNLECRVTSCGDAKCF). The tract at residues 792–832 (PPIFYETPSPTSAPPTETPSPTDTPTDKPTIPPTPTPTPSK) is disordered. The span at 810–820 (PSPTDTPTDKP) shows a compositional bias: low complexity. Residues asparagine 845 and asparagine 991 are each glycosylated (N-linked (GlcNAc...) asparagine). 2 disordered regions span residues 1033–1068 (LGSSGSGSSGNSGSSGSGGSSNDSTESQWSSESESS) and 1095–1124 (PQPTPSTDIPTTTTTTTSTSTTGPIEPTST). Positions 1036–1051 (SGSGSSGNSGSSGSGG) are enriched in gly residues. Low complexity-rich tracts occupy residues 1052-1068 (SSNDSTESQWSSESESS) and 1099-1124 (PSTDIPTTTTTTTSTSTTGPIEPTST). Residue asparagine 1054 is glycosylated (N-linked (GlcNAc...) asparagine). A CNA-B 1 domain is found at 1159 to 1227 (VSGVEITLIQ…LLNKYPIDTS (69 aa)). 2 N-linked (GlcNAc...) asparagine glycosylation sites follow: asparagine 1229 and asparagine 1247. One can recognise a CNA-B 2 domain in the interval 1304-1373 (IKGIQVTLKD…VYTMDTFQLS (70 aa)). N-linked (GlcNAc...) asparagine glycosylation is present at asparagine 1381. CNA-B domains follow at residues 1437 to 1515 (LPGV…IDTK), 1582 to 1648 (VPGI…LTLD), and 1731 to 1809 (VGGV…FTLS). Residues asparagine 1769 and asparagine 1815 are each glycosylated (N-linked (GlcNAc...) asparagine). Residues 1883–1955 (GSTVDGGTSV…SEQPPEDSME (73 aa)) are disordered. Low complexity predominate over residues 1898-1948 (STSTTTVSSSPSSSSDIGSSSDISSEVSSSLSSSPSSSEQPSEQSSSSSEQ). Residues 2015-2083 (VPDVTVTLVN…DPLSGKIDFN (69 aa)) form the CNA-B 6 domain. N-linked (GlcNAc...) asparagine glycosylation is found at asparagine 2128, asparagine 2145, asparagine 2243, asparagine 2294, asparagine 2351, asparagine 2378, asparagine 2453, asparagine 2493, asparagine 2496, asparagine 2516, asparagine 2572, asparagine 2601, asparagine 2624, asparagine 2668, asparagine 2698, asparagine 2714, asparagine 2781, asparagine 2787, asparagine 2800, asparagine 2838, and asparagine 2858. Positions 2143–2197 (FPNITVRLFDQNLQPVLDNFNIQVEPTVTNALGQYYFDNLHSGSYIVKFEVPTRY) constitute a CNA-B 7 domain. Residues 2292 to 2345 (VPNVTVEIFNPTGQQVYNINELLIGSTTTDSNGYYLFDEIQPGSYIIKFSNIPN) enclose the CNA-B 8 domain. In terms of domain architecture, CNA-B 9 spans 2453-2477 (NTTTTDQNGLYYFDNLSPGLYKLLF). The 54-residue stretch at 2713 to 2766 (VNGTIVTLLDINGNTMVDADSYPINSYTTGPDGYYKFDDFSFGKYIITFSGVPD) folds into the CNA-B 10 domain. The CNA-B 11 domain occupies 2984-3061 (LGGVVVTLYN…DSNASPVDGY (78 aa)). Residues asparagine 3083, asparagine 3130, asparagine 3372, asparagine 3390, asparagine 3459, asparagine 3466, asparagine 3557, asparagine 3666, asparagine 3676, and asparagine 3681 are each glycosylated (N-linked (GlcNAc...) asparagine). In terms of domain architecture, CNA-B 12 spans 3128–3201 (YPNITVSIYT…TKTGVNLGII (74 aa)). The region spanning 3664-3733 (MANITVQLFS…NDKRDLEKIN (70 aa)) is the CNA-B 13 domain.

Belongs to the serine-aspartate repeat-containing protein (SDr) family.

It is found in the secreted. The chain is Colossin-B (colB) from Dictyostelium discoideum (Social amoeba).